The primary structure comprises 1828 residues: Protein TIC 214 (1828 aa).

A run of 6 helical transmembrane segments spans residues 18 to 38, 64 to 84, 87 to 107, 124 to 144, 172 to 192, and 222 to 242; these read IINS…FSIG, FITG…HLAM, PYTI…WKNH, FSIQ…HFVL, VGWL…LFWI, and VNIF…SPIL. Basic and acidic residues predominate over residues 270-279; it reads SEAKETKQEQ. Disordered regions lie at residues 270 to 301, 618 to 637, 741 to 763, and 1533 to 1571; these read SEAK…PNKL, DLQQ…HAIR, EFKT…EDKK, and KEEF…RQSK. Residues 1550 to 1562 are compositionally biased toward basic and acidic residues; sequence KDVEKDYAKSDIK.

This sequence belongs to the TIC214 family. Part of the Tic complex.

It is found in the plastid. Its subcellular location is the chloroplast inner membrane. Its function is as follows. Involved in protein precursor import into chloroplasts. May be part of an intermediate translocation complex acting as a protein-conducting channel at the inner envelope. In Calycanthus floridus var. glaucus (Eastern sweetshrub), this protein is Protein TIC 214.